Here is a 96-residue protein sequence, read N- to C-terminus: uncharacterized protein (96 aa).

Helical transmembrane passes span 2-22 (FIFN…ICYF), 38-58 (AGLK…TVML), and 68-88 (LTLA…QLIV).

The protein localises to the membrane. This is an uncharacterized protein from Schizosaccharomyces pombe (strain 972 / ATCC 24843) (Fission yeast).